Here is a 183-residue protein sequence, read N- to C-terminus: Dual-action ribosomal maturation protein DarP (183 aa).

It belongs to the DarP family.

The protein localises to the cytoplasm. In terms of biological role, member of a network of 50S ribosomal subunit biogenesis factors which assembles along the 30S-50S interface, preventing incorrect 23S rRNA structures from forming. Promotes peptidyl transferase center (PTC) maturation. The sequence is that of Dual-action ribosomal maturation protein DarP from Salmonella arizonae (strain ATCC BAA-731 / CDC346-86 / RSK2980).